Consider the following 385-residue polypeptide: MAWSGGKDIVDQIFDAGYWLVSKSAVLSDEIKNHVEKSIESISGKISNKETPRLQENDSNRSKVYKTLRIGLQDHWKLGLGISATSLCLYLGYRTFFKLPPNLPEAESQVVLILGDMNDPIIRNQVMDLYRRRFTVYICTENADVYKKHEEDQDFIYYIDPTCEKDFEGFFVDVPRLASILFMPRLSYHPSGVISCDSLESEIHSSIFVYYQALLSIIPHLKRKTQLIMFNPSLTADLNLVHHSTEIITSGIIDSLFKIFKEYQRLNVSTIKLGILQIGSQPSNYKFLRMAGSDIHEALHYPVYKMIMSANGYKLRQLLSWLTTLGGYNSVYYCGRFSYLVSWPFASLIFNHHTRLSLKRLRGRLAKVYSSIISFFCRSSSKSSK.

It belongs to the UPF0744 family.

It localises to the mitochondrion outer membrane. This Saccharomyces cerevisiae (strain ATCC 204508 / S288c) (Baker's yeast) protein is UPF0744 protein YSC83 (YSC83).